Consider the following 78-residue polypeptide: Large ribosomal subunit protein bL28 (78 aa).

A disordered region spans residues 1-25; sequence MSRVCQVTGKRPTVGNNRSHAKNAT.

It belongs to the bacterial ribosomal protein bL28 family.

This is Large ribosomal subunit protein bL28 from Tolumonas auensis (strain DSM 9187 / NBRC 110442 / TA 4).